The primary structure comprises 936 residues: MTTGFLQKIFGSRNQRLVKQYQKTVTAINALEPQIEQLTDDQLRAKTGEFRQRVASGESLDKLLPEAFAVCREASKRVLKMRHFDVQLIGGMVLHYGKIGEMRTGEGKTLVATLPVYLNALSGRGVHVVTVNDYLAQRDAEWMARLYNFLGLSVGINLSQMDHGAKQEAYAADITYGTNNEFGFDYLRDNMVYETDARVQRALNFAVVDEVDSILIDEARTPLIISGQAEDHTDLYVRMNALPPLLERQIGEEKADGTGVERPGDYTLDEKGRQVFLTESGHEKAERLLAEWGLIGEGESLYAPQNITLMHHVYAALRAHTLFFKDQHYVVQNGEVVIVDEFTGRLMSGRRWSDGLHQAVEAKEHVKIQSENQTLASITFQNYFRMYAKLSGMTGTADTEAFEFNEIYGLETVVIPTNRPPKRIDKQDQIYKTAKERYDAVIRDIRDCYERGQPVLVGTTSIENSELLSHLLKQAGLPHEVLNAKQHAREAEIVAEAGRPKRVTIATNMAGRGTDIVLGGNAEKQASFIEKDETLSEEEKQRRIQKLHDEWQALHDQVKAAGGLHIIGTERHESRRIDNQLRGRAGRQGDPGSSRFYLSLEDPLLRIFAGDRVRAIMDRLKMPEGEAIEAGIVSRSIESAQRKVEARNFDVRKQLLEYDDVSNDQRKVIYQQRNELLEANDITETIGAMRQSVIGEIVHQFVPVGSIEEQWDVPELEEVLRNEWQLDLAIQEMINESNSISADEILEAVEAAADEAYEAKVELVGRESFSAFERSIMLQTLDRSWREHLAALDHLRQGIHLRGYAQKNPKQEYKREAFELFAAMLDAVKLEVTRVVMNVQIQSPEQLEQAAEQLEEQGGHLENVEFRHAEFAEAAAAAPVAAEAATAAMIGDAMSHGSSHTAAANLSADNVPKVGRNDPCPCGSGKKYKQCHGKIV.

ATP-binding positions include Gln-87, 105 to 109 (GEGKT), and Asp-515. Residues Cys-920, Cys-922, Cys-931, and His-932 each contribute to the Zn(2+) site.

This sequence belongs to the SecA family. As to quaternary structure, monomer and homodimer. Part of the essential Sec protein translocation apparatus which comprises SecA, SecYEG and auxiliary proteins SecDF-YajC and YidC. The cofactor is Zn(2+).

It localises to the cell inner membrane. It is found in the cytoplasm. The enzyme catalyses ATP + H2O + cellular proteinSide 1 = ADP + phosphate + cellular proteinSide 2.. Part of the Sec protein translocase complex. Interacts with the SecYEG preprotein conducting channel. Has a central role in coupling the hydrolysis of ATP to the transfer of proteins into and across the cell membrane, serving both as a receptor for the preprotein-SecB complex and as an ATP-driven molecular motor driving the stepwise translocation of polypeptide chains across the membrane. This is Protein translocase subunit SecA from Paraburkholderia phytofirmans (strain DSM 17436 / LMG 22146 / PsJN) (Burkholderia phytofirmans).